A 128-amino-acid chain; its full sequence is B2 protein (128 aa).

The N-terminal stretch at 1–10 is a signal peptide; sequence SLILLVAVQA. 2 cysteine pairs are disulfide-bonded: Cys-26–Cys-57 and Cys-97–Cys-114.

It belongs to the PBP/GOBP family. N-glycosylated. As to expression, tubular accessory sex gland.

The protein resides in the secreted. Its function is as follows. May be a carrier protein for lipids. This Tenebrio molitor (Yellow mealworm beetle) protein is B2 protein.